The chain runs to 214 residues: Putative F-box protein At5g15670 (214 aa).

In terms of domain architecture, F-box spans 22–68 (RNKFDEIPHDLVIEILGRLPAKSVARFLTVSKLWATSIRSLDFIKSY).

The sequence is that of Putative F-box protein At5g15670 from Arabidopsis thaliana (Mouse-ear cress).